Here is a 273-residue protein sequence, read N- to C-terminus: Large ribosomal subunit protein uL2cz/uL2cy (273 aa).

Disordered regions lie at residues 1–20 and 225–273; these read MAKHLYKTPIPSTRKGTIDR and PVDH…RRRK.

Belongs to the universal ribosomal protein uL2 family. Part of the 50S ribosomal subunit.

It is found in the plastid. The protein resides in the chloroplast. This is Large ribosomal subunit protein uL2cz/uL2cy (rpl2-A) from Oryza nivara (Indian wild rice).